The primary structure comprises 378 residues: D-alanine--D-alanine ligase (378 aa).

An ATP-grasp domain is found at 149-374 (KVLLRAAGIP…FRTVVTDLIE (226 aa)). 189-247 (EAGLQYPLFVKPSRAGSSFGVTKVEQIGDAAALAAAVFEASRHDWRVLVEQGIDAREIE) is an ATP binding site. Aspartate 328, glutamate 341, and asparagine 343 together coordinate Mg(2+).

Belongs to the D-alanine--D-alanine ligase family. Mg(2+) serves as cofactor. Requires Mn(2+) as cofactor.

The protein resides in the cytoplasm. It catalyses the reaction 2 D-alanine + ATP = D-alanyl-D-alanine + ADP + phosphate + H(+). The protein operates within cell wall biogenesis; peptidoglycan biosynthesis. Cell wall formation. The polypeptide is D-alanine--D-alanine ligase (Bifidobacterium animalis subsp. lactis (strain AD011)).